The following is a 76-amino-acid chain: ATP synthase subunit 9, mitochondrial (76 aa).

2 helical membrane-spanning segments follow: residues 14–34 (ISTI…AALI) and 48–68 (FPFA…CLMV).

This sequence belongs to the ATPase C chain family. As to quaternary structure, F-type ATPases have 2 components, CF(1) - the catalytic core - and CF(0) - the membrane proton channel. CF(1) has five subunits: alpha(3), beta(3), gamma(1), delta(1), epsilon(1). CF(0) has three main subunits: a, b and c.

The protein localises to the mitochondrion membrane. Its function is as follows. Mitochondrial membrane ATP synthase (F(1)F(0) ATP synthase or Complex V) produces ATP from ADP in the presence of a proton gradient across the membrane which is generated by electron transport complexes of the respiratory chain. F-type ATPases consist of two structural domains, F(1) - containing the extramembraneous catalytic core and F(0) - containing the membrane proton channel, linked together by a central stalk and a peripheral stalk. During catalysis, ATP synthesis in the catalytic domain of F(1) is coupled via a rotary mechanism of the central stalk subunits to proton translocation. Part of the complex F(0) domain. A homomeric c-ring of probably 10 subunits is part of the complex rotary element. This is ATP synthase subunit 9, mitochondrial (ATP9) from Cyberlindnera mrakii (Yeast).